The following is a 227-amino-acid chain: Cytochrome c oxidase subunit 2 (227 aa).

Residues 1–14 (MAYPLQLGLQDATS) are Mitochondrial intermembrane-facing. The chain crosses the membrane as a helical span at residues 15-45 (PIMEELMNFHDHTLMIVFLISSLVLYVISSM). Residues 46 to 59 (LTTKLTHTSTMDAQ) are Mitochondrial matrix-facing. Residues 60-87 (EVETIWTILPAVILIMIALPSLRILYMM) traverse the membrane as a helical segment. Residues 88 to 227 (DEINNPVLTV…NFETWSVSMI (140 aa)) lie on the Mitochondrial intermembrane side of the membrane. Positions 161, 196, 198, 200, 204, and 207 each coordinate Cu cation. Position 198 (E198) interacts with Mg(2+).

The protein belongs to the cytochrome c oxidase subunit 2 family. As to quaternary structure, component of the cytochrome c oxidase (complex IV, CIV), a multisubunit enzyme composed of 14 subunits. The complex is composed of a catalytic core of 3 subunits MT-CO1, MT-CO2 and MT-CO3, encoded in the mitochondrial DNA, and 11 supernumerary subunits COX4I, COX5A, COX5B, COX6A, COX6B, COX6C, COX7A, COX7B, COX7C, COX8 and NDUFA4, which are encoded in the nuclear genome. The complex exists as a monomer or a dimer and forms supercomplexes (SCs) in the inner mitochondrial membrane with NADH-ubiquinone oxidoreductase (complex I, CI) and ubiquinol-cytochrome c oxidoreductase (cytochrome b-c1 complex, complex III, CIII), resulting in different assemblies (supercomplex SCI(1)III(2)IV(1) and megacomplex MCI(2)III(2)IV(2)). Found in a complex with TMEM177, COA6, COX18, COX20, SCO1 and SCO2. Interacts with TMEM177 in a COX20-dependent manner. Interacts with COX20. Interacts with COX16. Requires Cu cation as cofactor.

The protein resides in the mitochondrion inner membrane. It catalyses the reaction 4 Fe(II)-[cytochrome c] + O2 + 8 H(+)(in) = 4 Fe(III)-[cytochrome c] + 2 H2O + 4 H(+)(out). Functionally, component of the cytochrome c oxidase, the last enzyme in the mitochondrial electron transport chain which drives oxidative phosphorylation. The respiratory chain contains 3 multisubunit complexes succinate dehydrogenase (complex II, CII), ubiquinol-cytochrome c oxidoreductase (cytochrome b-c1 complex, complex III, CIII) and cytochrome c oxidase (complex IV, CIV), that cooperate to transfer electrons derived from NADH and succinate to molecular oxygen, creating an electrochemical gradient over the inner membrane that drives transmembrane transport and the ATP synthase. Cytochrome c oxidase is the component of the respiratory chain that catalyzes the reduction of oxygen to water. Electrons originating from reduced cytochrome c in the intermembrane space (IMS) are transferred via the dinuclear copper A center (CU(A)) of subunit 2 and heme A of subunit 1 to the active site in subunit 1, a binuclear center (BNC) formed by heme A3 and copper B (CU(B)). The BNC reduces molecular oxygen to 2 water molecules using 4 electrons from cytochrome c in the IMS and 4 protons from the mitochondrial matrix. This Malacothrix typica (Long-eared mouse) protein is Cytochrome c oxidase subunit 2 (MT-CO2).